The sequence spans 129 residues: UPF0344 protein MW0851 (129 aa).

Helical transmembrane passes span 1-21 (MLHL…ATYL), 36-56 (LHMI…WILI), 67-87 (MLLT…EVSI), and 99-119 (MFWI…ILPL).

Belongs to the UPF0344 family.

The protein resides in the cell membrane. The polypeptide is UPF0344 protein MW0851 (Staphylococcus aureus (strain MW2)).